The chain runs to 117 residues: Heat shock 70 kDa protein 1-like (117 aa).

ATP is bound by residues 72–75 and 84–87; these read ERAK and GSTR.

Belongs to the heat shock protein 70 family. Interacts with PRKN. In terms of tissue distribution, detected at higher levels in caput epididymal spermatazoa than in cauda epididymal spermatazoa (at protein level).

In terms of biological role, molecular chaperone implicated in a wide variety of cellular processes, including protection of the proteome from stress, folding and transport of newly synthesized polypeptides, activation of proteolysis of misfolded proteins and the formation and dissociation of protein complexes. Plays a pivotal role in the protein quality control system, ensuring the correct folding of proteins, the re-folding of misfolded proteins and controlling the targeting of proteins for subsequent degradation. This is achieved through cycles of ATP binding, ATP hydrolysis and ADP release, mediated by co-chaperones. The affinity for polypeptides is regulated by its nucleotide bound state. In the ATP-bound form, it has a low affinity for substrate proteins. However, upon hydrolysis of the ATP to ADP, it undergoes a conformational change that increases its affinity for substrate proteins. It goes through repeated cycles of ATP hydrolysis and nucleotide exchange, which permits cycles of substrate binding and release. Positive regulator of PRKN translocation to damaged mitochondria. The sequence is that of Heat shock 70 kDa protein 1-like from Mesocricetus auratus (Golden hamster).